Consider the following 114-residue polypeptide: UPF0342 protein OEOE_0901 (114 aa).

The protein belongs to the UPF0342 family.

This is UPF0342 protein OEOE_0901 from Oenococcus oeni (strain ATCC BAA-331 / PSU-1).